A 166-amino-acid chain; its full sequence is uncharacterized protein (166 aa).

Ala-2 carries the N-acetylalanine modification.

As to quaternary structure, homodimer.

This is an uncharacterized protein from Arabidopsis thaliana (Mouse-ear cress).